A 492-amino-acid chain; its full sequence is Malonyl-CoA decarboxylase, mitochondrial (492 aa).

The tract at residues 1–28 (MRGLGPGLRARRLLPLRSPPRPPGPRGR) is disordered. Residues 1 to 38 (MRGLGPGLRARRLLPLRSPPRPPGPRGRRLCGGLAASA) constitute a mitochondrion transit peptide. Residues 39–189 (MDELLRRAVP…VLKSMLSEWF (151 aa)) are alpha-helical domain. K58 is subject to N6-acetyllysine. At K167 the chain carries N6-acetyllysine; alternate. The residue at position 167 (K167) is an N6-succinyllysine; alternate. Residues 190–492 (SSGFLNLERV…VAQFQNNSKL (303 aa)) form a catalytic domain region. Position 210 is an N6-acetyllysine (K210). Residue K221 is modified to N6-succinyllysine. 298–304 (QGVELGT) lines the malonyl-CoA pocket. Residue K316 is modified to N6-acetyllysine. S328 serves as a coordination point for malonyl-CoA. S328 (proton acceptor) is an active-site residue. K385 is modified (N6-acetyllysine; alternate). Position 385 is an N6-succinyllysine; alternate (K385). K388 carries the N6-acetyllysine modification. Malonyl-CoA is bound at residue H422. H422 serves as the catalytic Proton donor. Residues K441 and K471 each carry the N6-acetyllysine modification. Positions 490-492 (SKL) match the Microbody targeting signal motif.

In terms of assembly, homotetramer. Dimer of dimers. The two subunits within a dimer display conformational differences suggesting that at any given moment, only one of the two subunits is competent for malonyl-CoA binding and catalytic activity. Under oxidizing conditions, can form disulfide-linked homotetramers (in vitro). Associates with the peroxisomal targeting signal receptor PEX5. In terms of processing, interchain disulfide bonds may form in peroxisomes (Potential). Interchain disulfide bonds are not expected to form in the reducing environment of the cytoplasm and mitochondria. Post-translationally, acetylation at Lys-471 activates malonyl-CoA decarboxylase activity. Deacetylation at Lys-471 by SIRT4 represses activity, leading to promote lipogenesis.

It localises to the cytoplasm. The protein resides in the mitochondrion matrix. Its subcellular location is the peroxisome. It is found in the peroxisome matrix. It carries out the reaction malonyl-CoA + H(+) = acetyl-CoA + CO2. Its pathway is metabolic intermediate biosynthesis; acetyl-CoA biosynthesis; acetyl-CoA from malonyl-CoA: step 1/1. Malonyl-CoA decarboxylase activity does not require any cofactors or divalent metal ions. Catalyzes the conversion of malonyl-CoA to acetyl-CoA. In the fatty acid biosynthesis MCD selectively removes malonyl-CoA and thus assures that methyl-malonyl-CoA is the only chain elongating substrate for fatty acid synthase and that fatty acids with multiple methyl side chains are produced. In peroxisomes it may be involved in degrading intraperoxisomal malonyl-CoA, which is generated by the peroxisomal beta-oxidation of odd chain-length dicarboxylic fatty acids. Plays a role in the metabolic balance between glucose and lipid oxidation in muscle independent of alterations in insulin signaling. Plays a role in controlling the extent of ischemic injury by promoting glucose oxidation. The chain is Malonyl-CoA decarboxylase, mitochondrial from Mus musculus (Mouse).